A 645-amino-acid polypeptide reads, in one-letter code: Fructose-1,6-bisphosphatase class 3 (645 aa).

It belongs to the FBPase class 3 family. Mn(2+) is required as a cofactor.

It carries out the reaction beta-D-fructose 1,6-bisphosphate + H2O = beta-D-fructose 6-phosphate + phosphate. It functions in the pathway carbohydrate biosynthesis; gluconeogenesis. The chain is Fructose-1,6-bisphosphatase class 3 from Fusobacterium nucleatum subsp. nucleatum (strain ATCC 25586 / DSM 15643 / BCRC 10681 / CIP 101130 / JCM 8532 / KCTC 2640 / LMG 13131 / VPI 4355).